The primary structure comprises 490 residues: Histone-lysine N-methyltransferase Smyd1 (490 aa).

One can recognise an SET domain in the interval 7 to 253; the sequence is ENVEVFTSEG…EGEELTVSYI (247 aa). S-adenosyl-L-methionine is bound at residue 17-19; it reads KGR. Residues Cys-52, Cys-55, Cys-65, Cys-68, Cys-74, Cys-78, His-86, and Cys-90 each coordinate Zn(2+). An MYND-type zinc finger spans residues 52–90; it reads CHTCFKRQEKLHRCGQCKFAHYCDRTCQKDAWLNHKNEC. Residues His-135 and 205–206 each bind S-adenosyl-L-methionine; that span reads NH. Cys-208 is a binding site for Zn(2+). 270–272 provides a ligand contact to S-adenosyl-L-methionine; the sequence is YYF. Residues Cys-274, Cys-276, and Cys-279 each contribute to the Zn(2+) site.

It belongs to the class V-like SAM-binding methyltransferase superfamily. As to quaternary structure, interacts with HDAC1, HDAC2 and HDAC3. Interacts (via MYND-type zinc finger) with NACA isoform skNAC. As to expression, expressed in cardiac and skeletal muscle, lymphocytes and thymus.

The protein resides in the cytoplasm. It is found in the nucleus. It catalyses the reaction L-lysyl(4)-[histone H3] + 3 S-adenosyl-L-methionine = N(6),N(6),N(6)-trimethyl-L-lysyl(4)-[histone H3] + 3 S-adenosyl-L-homocysteine + 3 H(+). In terms of biological role, methylates histone H3 at 'Lys-4' (H3K4me). Acts as a transcriptional repressor. Essential for cardiomyocyte differentiation and cardiac morphogenesis. The chain is Histone-lysine N-methyltransferase Smyd1 (Smyd1) from Mus musculus (Mouse).